A 193-amino-acid polypeptide reads, in one-letter code: MLGVLELLLLGAAWLAGPARGQNETEPIVLEGKCLVVCDSNPTSDPTGTALGISVRSGSAKVAFSAIRSTNHEPSEMSNRTMIIYFDQVLVNIGNNFDSERSTFIAPRKGIYSFNFHVVKVYNRQTIQVSLMLNGWPVISAFAGDQDVTREAASNGVLIQMEKGDRAYLKLERGNLMGGWKYSTFSGFLVFPL.

The N-terminal stretch at 1-21 is a signal peptide; the sequence is MLGVLELLLLGAAWLAGPARG. A glycan (N-linked (GlcNAc...) asparagine) is linked at N23. An essential for interaction with NRXN1 and linker of two C1q trimers into disulfide-linked hexamers region spans residues 34 to 38; sequence CLVVC. Positions 57-193 constitute a C1q domain; the sequence is SGSAKVAFSA…TFSGFLVFPL (137 aa). The segment at 62–193 is necessary for interaction with CBLN3, and homotrimerization; sequence VAFSAIRSTN…TFSGFLVFPL (132 aa). Residue N79 is glycosylated (N-linked (GlcNAc...) asparagine). The interval 122–147 is essential for interaction with GRID2; the sequence is YNRQTIQVSLMLNGWPVISAFAGDQD.

Homohexamer; disulfide-linked homotrimers. The trimers associate via N-terminal cysteine residues to form disulfide-linked hexamers. May form oligomers with CBLN2, CBLN3 AND CBLN4 prior to secretion. Once secreted, does not interact with other CBLN family members. Interacts with GRID1. Interacts with NRXN1 and NRXN2 long (alpha) and short (beta) isoforms produced by alternative promoter usage. Competes with NLGN1 for NRXN1-binding. Weakly interacts with NRXN3 short isoform and not at all with NRXN3 long isoform. Interacts (via C1q domain) with GRID2; GRID2-binding is calcium-independent; CBLN1 hexamers anchor GRID2 N-terminal domain dimers to monomeric NRXN1 isoform beta; promotes synaptogenesis and mediates the D-Serine-dependent long term depression signals and AMPA receptor endocytosis. Interacts with OTOL1. Post-translationally, the proteolytic processing to yield cerebellin seems to occur either prior to the secretion by presynaptic neurons and subsequent oligomerization or in some other location after release of the mature protein. Sialoglycoprotein. In terms of tissue distribution, in the Purkinje cells postsynaptic structures. In the cerebellum, cerebellin is much less abundant than [des-Ser1]-cerebellin.

The protein resides in the secreted. It localises to the postsynaptic cell membrane. Functionally, required for synapse integrity and synaptic plasticity. During cerebellar synapse formation, essential for the matching and maintenance of pre- and post-synaptic elements at parallel fiber-Purkinje cell synapses, the establishment of the proper pattern of climbing fiber-Purkinje cell innervation, and induction of long-term depression at parallel fiber-Purkinje cell synapses. Plays a role as a synaptic organizer that acts bidirectionally on both pre- and post-synaptic components. On the one hand induces accumulation of synaptic vesicles in the pre-synaptic part by binding with NRXN1 and in other hand induces clustering of GRID2 and its associated proteins at the post-synaptic site through association of GRID2. NRXN1-CBLN1-GRID2 complex directly induces parallel fiber protrusions that encapsulate spines of Purkinje cells leading to accumulation of GRID2 and synaptic vesicles. Required for CBLN3 export from the endoplasmic reticulum and secretion. NRXN1-CBLN1-GRID2 complex mediates the D-Serine-dependent long term depression signals and AMPA receptor endocytosis. Essential for long-term maintenance but not establishment of excitatory synapses. Inhibits the formation and function of inhibitory GABAergic synapses in cerebellar Purkinje cells. The cerebellin peptide exerts neuromodulatory functions. Directly stimulates norepinephrine release via the adenylate cyclase/PKA-dependent signaling pathway; and indirectly enhances adrenocortical secretion in vivo, through a paracrine mechanism involving medullary catecholamine release. The sequence is that of Cerebellin-1 (CBLN1) from Homo sapiens (Human).